A 141-amino-acid chain; its full sequence is Large ribosomal subunit protein uL16c (141 aa).

Over residues 1–17 (MLSPKRTKYRKPHRGNR) the composition is skewed to basic residues. The segment at 1–21 (MLSPKRTKYRKPHRGNRKGQA) is disordered.

Belongs to the universal ribosomal protein uL16 family. Part of the 50S ribosomal subunit.

The protein resides in the plastid. It is found in the chloroplast. The protein is Large ribosomal subunit protein uL16c of Ostreococcus tauri.